The chain runs to 614 residues: FAD-linked oxidoreductase ffsJ (614 aa).

The signal sequence occupies residues 1 to 19; sequence MRLTRALTPAILALPAAHA. Asparagine 30, asparagine 53, asparagine 72, and asparagine 114 each carry an N-linked (GlcNAc...) asparagine glycan. One can recognise an FAD-binding PCMH-type domain in the interval 119 to 301; that stretch reads TGSLPAYYID…LSSTHRVEPE (183 aa). Asparagine 314, asparagine 329, asparagine 461, asparagine 465, asparagine 478, and asparagine 514 each carry an N-linked (GlcNAc...) asparagine glycan. The disordered stretch occupies residues 453–495; it reads NGHGRSNNNNSNNSSTSTSTSTSSKNGSVKPYAYGGKETTSST. A compositionally biased stretch (low complexity) spans 456 to 480; the sequence is GRSNNNNSNNSSTSTSTSTSSKNGS.

Belongs to the oxygen-dependent FAD-linked oxidoreductase family. The cofactor is FAD.

It participates in mycotoxin biosynthesis. FAD-linked oxidoreductase; part of the gene cluster that mediates the biosynthesis of the cytotoxic leucine-containing cytochalasans, including aspochalasin C, aspochalasin E, TMC-169, flavichalasine F, aspergillin PZ, aspochalasin M and flavichalasine G. The first step in the pathway is catalyzed by the hybrid PKS-NRPS ffsA that utilizes 8 units of malonyl-CoA to iteratively assemble the octaketide chain before addition of L-leucine by the C-terminal NRPS modules. Because ffsA lacks a designated enoylreductase (ER) domain, the required activity is provided the enoyl reductase fssC. The methyltransferase (MT) domain of ffsA catalyzes the alpha-methylation at C10 and C14 using S-adenosyl-L-methionine as the methyl-donating cosubstrate. Reduction by the hydrolyase ffsE, followed by dehydration and intra-molecular Diels-Alder cyclization by the Diels-Alderase ffsF then yield the required isoindolone-fused macrocycle. A number of oxidative steps catalyzed by the tailoring cytochrome P450 monooxygenase ffsD, the FAD-linked oxidoreductase ffsJ and the short-chain dehydrogenase/reductase ffsI, are further required to afford the final products. The sequence is that of FAD-linked oxidoreductase ffsJ from Aspergillus flavipes.